Here is a 1381-residue protein sequence, read N- to C-terminus: MASPRASRWPPPLLLLLLPLLLLPPAAPGTRDPPPSPARRALSLAPLAGAGLELQLERRPEREPPPTPPRERRGPATPGPSYRAPEPGAATQRGPSGRAPRGGSADAAWKHWPESNTEAHVENITFYQNQEDFSTVSSKEGVMVQTSGKSHAASDAPENLTLLAETADARGRSGSSSRTNFTILPVGYSLEIATALTSQSGNLASESLHLPSSSSEFDERIAAFQTKSGTASEMGTERAMGLSEEWTVHSQEATTSAWSPSFLPALEMGELTTPSRKRNSSGPDLSWLHFYRTAASSPLLDLSSSSESTEKLNNSTGLQSSSVSQTKTMHVATVFTDGGPRTLRSLTVSLGPVSKTEGFPKDSRIATTSSSVLLSPSAVESRRNSRVTGNPGDEEFIEPSTENEFGLTSLRWQNDSPTFGEHQLASSSEVQNGSPMSQTETVSRSVAPMRGGEITAHWLLTNSTTSADVTGSSASYPEGVNASVLTQFSDSTVQSGGSHTALGDRSYSESSSTSSSESLNSSAPRGERSIAGISYGQVRGTAIEQRTSSDHTDHTYLSSTFTKGERALLSITDNSSSSDIVESSTSYIKISNSSHSEYSSFFHAQTERSNISSYDGEYAQPSTESPVLHTSNLPSYTPTINMPNTSVVLDTDAEFVSDSSSSSSSSSSSSSSGPPLPLPSVSQSHHLFSSILPSTRASVHLLKSTSDASTPWSSSPSPLPVSLTTSTSAPLSVSQTTLPQSSSTPVLPRARETPVTSFQTSTMTSFMTMLHSSQTADLKSQSTPHQEKVITESKSPSLVSLPTESTKAVTTNSPLPPSLTESSTEQTLPATSTNLAQMSPTFTTTILKTSQPLMTTPGTLSSTASLVTGPIAVQTTAGKQLSLTHPEILVPQISTEGGISTERNRVIVDATTGLIPLTSVPTSAKEMTTKLGVTAEYSPASRSLGTSPSPQTTVVSTAEDLAPKSATFAVQSSTQSPTTVSSSASVNSCAVNPCLHNGECVADNTSRGYHCRCPPSWQGDDCSVDVNECLSNPCPSTAMCNNTQGSFICKCPVGYQLEKGICNLVRTFVTEFKLKRTFLNTTVEKHSDLQEVENEITKTLNMCFSALPSYIRSTVHASRESNAVVISLQTTFSLASNVTLFDLADRMQKCVNSCKSSAEVCQLLGSQRRIFRAGSLCKRKSPECDKDTSICTDLDGVALCQCKSGYFQFNKMDHSCRACEDGYRLENETCMSCPFGLGGLNCGNPYQLITVVIAAAGGGLLLILGIALIVTCCRKNKNDISKLIFKSGDFQMSPYAEYPKNPRSQEWGREAIEMHENGSTKNLLQMTDVYYSPTSVRNPELERNGLYPAYTGLPGSRHSCIFPGQYNPSFISDESRRRDYF.

An N-terminal signal peptide occupies residues 1–29; sequence MASPRASRWPPPLLLLLLPLLLLPPAAPG. The disordered stretch occupies residues 24–108; that stretch reads PPAAPGTRDP…APRGGSADAA (85 aa). Pro residues predominate over residues 25–37; it reads PAAPGTRDPPPSP. Topologically, residues 30-1248 are extracellular; sequence TRDPPPSPAR…GLNCGNPYQL (1219 aa). A compositionally biased stretch (low complexity) spans 38 to 52; the sequence is ARRALSLAPLAGAGL. Positions 55-74 are enriched in basic and acidic residues; that stretch reads QLERRPEREPPPTPPRERRG. A glycan (O-linked (GalNAc...) threonine) is linked at T67. Residues 93–105 show a composition bias toward low complexity; the sequence is RGPSGRAPRGGSA. N-linked (GlcNAc...) asparagine glycans are attached at residues N123, N159, N180, and N314. The segment covering 301-316 has biased composition (low complexity); it reads DLSSSSESTEKLNNST. Disordered regions lie at residues 301–325 and 376–447; these read DLSSSSESTEKLNNSTGLQSSSVSQ and PSAV…RSVA. The span at 424–444 shows a compositional bias: polar residues; that stretch reads LASSSEVQNGSPMSQTETVSR. N-linked (GlcNAc...) asparagine glycans are attached at residues N462, N520, and N610. The disordered stretch occupies residues 491–529; the sequence is STVQSGGSHTALGDRSYSESSSTSSSESLNSSAPRGERS. Positions 508 to 522 are enriched in low complexity; it reads SESSSTSSSESLNSS. Disordered stretches follow at residues 612 to 680, 706 to 757, and 774 to 830; these read SSYD…PLPS, SDAS…PVTS, and QTAD…TLPA. Polar residues predominate over residues 620-648; sequence QPSTESPVLHTSNLPSYTPTINMPNTSVV. Low complexity-rich tracts occupy residues 657-680 and 706-748; these read SDSSSSSSSSSSSSSSGPPLPLPS and SDAS…PVLP. Polar residues-rich tracts occupy residues 774 to 784 and 792 to 809; these read QTADLKSQSTP and ESKSPSLVSLPTESTKAV. Residues 810–825 are compositionally biased toward low complexity; it reads TTNSPLPPSLTESSTE. Residues 985 to 1023 form the EGF-like 1 domain; it reads SVNSCAVNPCLHNGECVADNTSRGYHCRCPPSWQGDDCS. 6 cysteine pairs are disulfide-bonded: C989–C1000, C994–C1011, C1013–C1022, C1029–C1040, C1034–C1049, and C1051–C1062. Residues 1025–1063 enclose the EGF-like 2; calcium-binding domain; it reads DVNECLSNPCPSTAMCNNTQGSFICKCPVGYQLEKGICN. An N-linked (GlcNAc...) asparagine glycan is attached at N1137. The helical transmembrane segment at 1249 to 1269 threads the bilayer; the sequence is ITVVIAAAGGGLLLILGIALI. Topologically, residues 1270 to 1381 are cytoplasmic; sequence VTCCRKNKND…SDESRRRDYF (112 aa). S1359 carries the phosphoserine modification.

As to quaternary structure, interacts with CCM2 and KRIT1; KRIT1 markedly facilitates interaction with CCM2.

The protein resides in the cell membrane. Its subcellular location is the cell junction. It localises to the secreted. Its function is as follows. Receptor component of the CCM signaling pathway which is a crucial regulator of heart and vessel formation and integrity. May act through the stabilization of endothelial cell junctions. This is Protein HEG homolog 1 (HEG1) from Homo sapiens (Human).